Reading from the N-terminus, the 430-residue chain is Serine--tRNA ligase (430 aa).

231-233 (TSE) is an L-serine binding site. 262–264 (RSE) serves as a coordination point for ATP. L-serine is bound at residue glutamate 285. 349–352 (EISS) serves as a coordination point for ATP. Position 385 (serine 385) interacts with L-serine.

This sequence belongs to the class-II aminoacyl-tRNA synthetase family. Type-1 seryl-tRNA synthetase subfamily. In terms of assembly, homodimer. The tRNA molecule binds across the dimer.

It is found in the cytoplasm. It carries out the reaction tRNA(Ser) + L-serine + ATP = L-seryl-tRNA(Ser) + AMP + diphosphate + H(+). It catalyses the reaction tRNA(Sec) + L-serine + ATP = L-seryl-tRNA(Sec) + AMP + diphosphate + H(+). Its pathway is aminoacyl-tRNA biosynthesis; selenocysteinyl-tRNA(Sec) biosynthesis; L-seryl-tRNA(Sec) from L-serine and tRNA(Sec): step 1/1. Functionally, catalyzes the attachment of serine to tRNA(Ser). Is also able to aminoacylate tRNA(Sec) with serine, to form the misacylated tRNA L-seryl-tRNA(Sec), which will be further converted into selenocysteinyl-tRNA(Sec). The sequence is that of Serine--tRNA ligase from Jannaschia sp. (strain CCS1).